The chain runs to 102 residues: Malonate decarboxylase acyl carrier protein (102 aa).

Ser27 carries the post-translational modification O-(phosphoribosyl dephospho-coenzyme A)serine.

This sequence belongs to the MdcC family. Post-translationally, covalently binds the prosthetic group of malonate decarboxylase.

Its subcellular location is the cytoplasm. Subunit of malonate decarboxylase, it is an acyl carrier protein to which acetyl and malonyl thioester residues are bound via a 2'-(5''-phosphoribosyl)-3'-dephospho-CoA prosthetic group and turn over during the catalytic mechanism. This chain is Malonate decarboxylase acyl carrier protein, found in Acinetobacter calcoaceticus.